The primary structure comprises 372 residues: Pre-small/secreted glycoprotein (372 aa).

The N-terminal stretch at 1 to 32 (MEGLSLLQLPRDKFRKSSFFVWVIILFQKAFS) is a signal peptide. The N-linked (GlcNAc...) asparagine; by host glycan is linked to Asn-40. Intrachain disulfides connect Cys-108–Cys-135 and Cys-121–Cys-147. N-linked (GlcNAc...) asparagine; by host glycosylation is found at Asn-204, Asn-208, Asn-238, Asn-257, and Asn-268. The segment at 320–340 (MRHRRELQREESPTGPPGSIR) is disordered.

Belongs to the filoviruses glycoprotein family. As to quaternary structure, homodimer; disulfide-linked. The homodimers are linked by two disulfide bonds in a parallel orientation. In terms of assembly, monomer. Post-translationally, this precursor is processed into mature sGP and delta-peptide by host furin or furin-like proteases. The cleavage site corresponds to the furin optimal cleavage sequence [KR]-X-[KR]-R. In terms of processing, N-glycosylated. O-glycosylated.

It localises to the secreted. Its function is as follows. Seems to possess an anti-inflammatory activity as it can reverse the barrier-decreasing effects of TNF alpha. Might therefore contribute to the lack of inflammatory reaction seen during infection in spite the of extensive necrosis and massive virus production. Does not seem to be involved in activation of primary macrophages. Does not seem to interact specifically with neutrophils. Viroporin that permeabilizes mammalian cell plasma membranes. It acts by altering permeation of ionic compounds and small molecules. This activity may lead to viral enterotoxic activity. The chain is Pre-small/secreted glycoprotein (GP) from Sudan ebolavirus (strain Boniface-76) (SEBOV).